Consider the following 391-residue polypeptide: G-patch domain-containing protein 1 (391 aa).

Residues 15–61 (KDSAAFKLMKSMGWEEGEGLGKDKQGIKGYVRVTNKQDTSGVGLDKP) enclose the G-patch domain. Disordered regions lie at residues 80–132 (VQAA…EKGK) and 212–307 (KASE…PAKR). 2 stretches are compositionally biased toward acidic residues: residues 92–102 (DDSDKEDESED) and 265–295 (NSDD…DDDK). The Nuclear localization signal signature appears at 305-312 (AKRKHDEI).

In terms of tissue distribution, strongly expressed in tissues with high cell proliferation activity that have a high demand for ribosome production such as shoot tips, leaves primordia, root tips and floral buds.

Its subcellular location is the nucleus. The protein resides in the nucleolus. Involved in ribosome biogenesis, required for normal progression of rRNA processing. Seems to promote cell proliferation in leaves. This chain is G-patch domain-containing protein 1, found in Arabidopsis thaliana (Mouse-ear cress).